Reading from the N-terminus, the 52-residue chain is Large ribosomal subunit protein eL40 (52 aa).

Positions 20, 23, 34, and 39 each coordinate Zn(2+).

It belongs to the eukaryotic ribosomal protein eL40 family. Component of the large ribosomal subunit. Mature ribosomes consist of a small (40S) and a large (60S) subunit. The 40S subunit contains about 32 different proteins and 1 molecule of RNA (18S). The 60S subunit contains 45 different proteins and 3 molecules of RNA (25S, 5.8S and 5S). Zn(2+) is required as a cofactor.

The protein resides in the cytoplasm. Its function is as follows. Component of the ribosome, a large ribonucleoprotein complex responsible for the synthesis of proteins in the cell. The small ribosomal subunit (SSU) binds messenger RNAs (mRNAs) and translates the encoded message by selecting cognate aminoacyl-transfer RNA (tRNA) molecules. The large subunit (LSU) contains the ribosomal catalytic site termed the peptidyl transferase center (PTC), which catalyzes the formation of peptide bonds, thereby polymerizing the amino acids delivered by tRNAs into a polypeptide chain. The nascent polypeptides leave the ribosome through a tunnel in the LSU and interact with protein factors that function in enzymatic processing, targeting, and the membrane insertion of nascent chains at the exit of the ribosomal tunnel. The protein is Large ribosomal subunit protein eL40 of Candida albicans (strain SC5314 / ATCC MYA-2876) (Yeast).